A 556-amino-acid polypeptide reads, in one-letter code: Putative cysteine ligase BshC (556 aa).

2 coiled-coil regions span residues 408-442 and 468-513; these read ILQK…IAQA and LGQV…ANLT.

The protein belongs to the BshC family.

Involved in bacillithiol (BSH) biosynthesis. May catalyze the last step of the pathway, the addition of cysteine to glucosamine malate (GlcN-Mal) to generate BSH. In Symbiobacterium thermophilum (strain DSM 24528 / JCM 14929 / IAM 14863 / T), this protein is Putative cysteine ligase BshC.